Reading from the N-terminus, the 601-residue chain is Elongation factor 4 (601 aa).

Residues 6–188 (SRTRNFSIIA…DIVKNVPPPK (183 aa)) enclose the tr-type G domain. GTP contacts are provided by residues 18–23 (DHGKST) and 135–138 (NKID).

It belongs to the TRAFAC class translation factor GTPase superfamily. Classic translation factor GTPase family. LepA subfamily.

It localises to the cell membrane. The enzyme catalyses GTP + H2O = GDP + phosphate + H(+). Required for accurate and efficient protein synthesis under certain stress conditions. May act as a fidelity factor of the translation reaction, by catalyzing a one-codon backward translocation of tRNAs on improperly translocated ribosomes. Back-translocation proceeds from a post-translocation (POST) complex to a pre-translocation (PRE) complex, thus giving elongation factor G a second chance to translocate the tRNAs correctly. Binds to ribosomes in a GTP-dependent manner. The chain is Elongation factor 4 from Clostridioides difficile (strain 630) (Peptoclostridium difficile).